We begin with the raw amino-acid sequence, 502 residues long: ATP synthase subunit alpha (502 aa).

169–176 lines the ATP pocket; it reads GDRQTGKT.

It belongs to the ATPase alpha/beta chains family. F-type ATPases have 2 components, CF(1) - the catalytic core - and CF(0) - the membrane proton channel. CF(1) has five subunits: alpha(3), beta(3), gamma(1), delta(1), epsilon(1). CF(0) has three main subunits: a(1), b(2) and c(9-12). The alpha and beta chains form an alternating ring which encloses part of the gamma chain. CF(1) is attached to CF(0) by a central stalk formed by the gamma and epsilon chains, while a peripheral stalk is formed by the delta and b chains.

It is found in the cell inner membrane. It carries out the reaction ATP + H2O + 4 H(+)(in) = ADP + phosphate + 5 H(+)(out). Functionally, produces ATP from ADP in the presence of a proton gradient across the membrane. The alpha chain is a regulatory subunit. This chain is ATP synthase subunit alpha, found in Citrifermentans bemidjiense (strain ATCC BAA-1014 / DSM 16622 / JCM 12645 / Bem) (Geobacter bemidjiensis).